Consider the following 332-residue polypeptide: Holliday junction branch migration complex subunit RuvB (332 aa).

The interval 1–181 (MARILDNNVM…FGITGHMEYY (181 aa)) is large ATPase domain (RuvB-L). Residues leucine 20, arginine 21, glycine 62, lysine 65, threonine 66, threonine 67, 128 to 130 (EDF), arginine 171, tyrosine 181, and arginine 218 contribute to the ATP site. A Mg(2+)-binding site is contributed by threonine 66. Residues 182–252 (QEKDLTEIVE…ITDRALTMLD (71 aa)) are small ATPAse domain (RuvB-S). Residues 255-332 (REGLNYIDQK…RHLGYPYQNT (78 aa)) are head domain (RuvB-H). Arginine 291, arginine 310, arginine 312, and arginine 315 together coordinate DNA.

It belongs to the RuvB family. In terms of assembly, homohexamer. Forms an RuvA(8)-RuvB(12)-Holliday junction (HJ) complex. HJ DNA is sandwiched between 2 RuvA tetramers; dsDNA enters through RuvA and exits via RuvB. An RuvB hexamer assembles on each DNA strand where it exits the tetramer. Each RuvB hexamer is contacted by two RuvA subunits (via domain III) on 2 adjacent RuvB subunits; this complex drives branch migration. In the full resolvosome a probable DNA-RuvA(4)-RuvB(12)-RuvC(2) complex forms which resolves the HJ.

It localises to the cytoplasm. The enzyme catalyses ATP + H2O = ADP + phosphate + H(+). The RuvA-RuvB-RuvC complex processes Holliday junction (HJ) DNA during genetic recombination and DNA repair, while the RuvA-RuvB complex plays an important role in the rescue of blocked DNA replication forks via replication fork reversal (RFR). RuvA specifically binds to HJ cruciform DNA, conferring on it an open structure. The RuvB hexamer acts as an ATP-dependent pump, pulling dsDNA into and through the RuvAB complex. RuvB forms 2 homohexamers on either side of HJ DNA bound by 1 or 2 RuvA tetramers; 4 subunits per hexamer contact DNA at a time. Coordinated motions by a converter formed by DNA-disengaged RuvB subunits stimulates ATP hydrolysis and nucleotide exchange. Immobilization of the converter enables RuvB to convert the ATP-contained energy into a lever motion, pulling 2 nucleotides of DNA out of the RuvA tetramer per ATP hydrolyzed, thus driving DNA branch migration. The RuvB motors rotate together with the DNA substrate, which together with the progressing nucleotide cycle form the mechanistic basis for DNA recombination by continuous HJ branch migration. Branch migration allows RuvC to scan DNA until it finds its consensus sequence, where it cleaves and resolves cruciform DNA. The chain is Holliday junction branch migration complex subunit RuvB from Streptococcus pyogenes serotype M18 (strain MGAS8232).